A 566-amino-acid polypeptide reads, in one-letter code: Amidophosphoribosyltransferase 1, chloroplastic (566 aa).

Low complexity predominate over residues 1–13 (MAATTSFSSSLSL). Disordered regions lie at residues 1-28 (MAAT…QPLP) and 58-87 (VSSY…DEKP). The N-terminal 58 residues, 1-58 (MAATTSFSSSLSLITKPNNSSYTNQPLPLFPKPFLKPPHLSLLPSPLSSPPPSLIHGV), are a transit peptide targeting the chloroplast. Residues 15–25 (TKPNNSSYTNQ) are compositionally biased toward polar residues. The span at 59–68 (SSYFSSPSPS) shows a compositional bias: low complexity. Positions 70-87 (DNSHTPFDYHNDEDDEKP) are enriched in basic and acidic residues. Cys91 (nucleophile) is an active-site residue. The 221-residue stretch at 91–311 (CGVVGIYGDP…PGEVLVVDKD (221 aa)) folds into the Glutamine amidotransferase type-2 domain. 4 residues coordinate [4Fe-4S] cluster: Cys327, Cys473, Cys524, and Cys527.

It in the C-terminal section; belongs to the purine/pyrimidine phosphoribosyltransferase family. The cofactor is [4Fe-4S] cluster. It depends on Mg(2+) as a cofactor. Expressed in flowers and roots. Also present in leaves, and, to a lower extent, in cotyledons.

It is found in the plastid. The protein localises to the chloroplast stroma. It carries out the reaction 5-phospho-beta-D-ribosylamine + L-glutamate + diphosphate = 5-phospho-alpha-D-ribose 1-diphosphate + L-glutamine + H2O. It participates in purine metabolism; IMP biosynthesis via de novo pathway; N(1)-(5-phospho-D-ribosyl)glycinamide from 5-phospho-alpha-D-ribose 1-diphosphate: step 1/2. Functionally, catalyzes the first committed step of 'de novo' purine biosynthesis from glutamine. Involved in plastid biogenesis and cell division. The chain is Amidophosphoribosyltransferase 1, chloroplastic (ASE1) from Arabidopsis thaliana (Mouse-ear cress).